A 205-amino-acid chain; its full sequence is uncharacterized protein (205 aa).

The 139-residue stretch at 51-189 folds into the Nudix hydrolase domain; that stretch reads ANVDAVAILA…KKGFAIDVRL (139 aa). Positions 90-111 match the Nudix box motif; sequence GLVDSKESCEDAAIRELREETG.

This sequence belongs to the Nudix hydrolase family.

Its subcellular location is the cytoplasm. It localises to the nucleus. This is an uncharacterized protein from Schizosaccharomyces pombe (strain 972 / ATCC 24843) (Fission yeast).